Here is a 952-residue protein sequence, read N- to C-terminus: MKLSPLSFSTSSSFSHADGIDDGVELISSPFAGGAMLPVFLNDLSRNSGESGSGSSWERELVEVTLELDVGDDSILVCGMSEAASVDSRARSVDLVTARLSRNLSNASTRIRQKLGKLLRSESWKTTTSSTAGERDRDLERQTAVTLGILTARDKRKEDAKLQRSTSSAQRALKGLQFINKTTRGNSCVCDWDCDCDQMWKKVEKRFESLSKNGLLARDDFGECVGMVDSKDFAVSVFDALARRRRQKLEKITKDELHDFWLQISDQSFDARLQIFFDMADSNEDGKITREEIKELLMLSASANKLAKLKEQAEEYASLIMEELDPENFGYIELWQLETLLLQRDAYMNYSRPLSTTSGGVSTPRRNLIRPRHVVQKCRKKLQCLILDNWQRSWVLLVWVMLMAILFVWKFLEYREKAAFKVMGYCLTTAKGAAETLKLNMALVLLPVCRNTLTWLRSTRARACVPFDDNINFHKIIACAIAIGILVHAGTHLACDFPRIINSSPEQFVLIASAFNGTKPTFKDLMTGAEGITGISMVILTTIAFTLASTHFRRNRVRLPAPLDRLTGFNAFWYTHHLLVVVYIMLIVHGTFLFFADKWYQKTTWMYISVPLVLYVAERSLRACRSKHYSVKILKVSMLPGEVLSLIMSKPPGFKYKSGQYIFLQCPTISRFEWHPFSITSAPGDDQLSVHIRTLGDWTEELRRVLTVGKDLSTCVIGRSKFSAYCNIDMINRPKLLVDGPYGAPAQDYRSYDVLLLIGLGIGATPFISILKDLLNNSRDEQTDNEFSRSDFSWNSCTSSYTTATPTSTHGGKKKAVKAHFYWVTREPGSVEWFRGVMEEISDMDCRGQIELHNYLTSVYDEGDARSTLIKMVQALNHAKHGVDILSGTRVRTHFARPNWKEVFSSIARKHPNSTVGVFYCGIQTVAKELKKQAQDMSQKTTTRFEFHKEHF.

The Cytoplasmic portion of the chain corresponds to 1 to 392; it reads MKLSPLSFST…QCLILDNWQR (392 aa). EF-hand-like regions lie at residues 211-219 and 245-256; these read SKNGLLARD and RRQKLEKITKDE. 2 EF-hand domains span residues 268 to 303 and 312 to 347; these read SFDARLQIFFDMADSNEDGKITREEIKELLMLSASA and QAEEYASLIMEELDPENFGYIELWQLETLLLQRDAY. Ca(2+) contacts are provided by Asp-281, Asn-283, Asp-285, Lys-287, and Glu-292. Residues 393 to 413 form a helical membrane-spanning segment; sequence SWVLLVWVMLMAILFVWKFLE. The Extracellular segment spans residues 414-475; that stretch reads YREKAAFKVM…PFDDNINFHK (62 aa). Residues 431–587 form the Ferric oxidoreductase domain; it reads KGAAETLKLN…LLVVVYIMLI (157 aa). Residues 476-496 traverse the membrane as a helical segment; it reads IIACAIAIGILVHAGTHLACD. Over 497 to 531 the chain is Cytoplasmic; sequence FPRIINSSPEQFVLIASAFNGTKPTFKDLMTGAEG. Residues 532–552 traverse the membrane as a helical segment; it reads ITGISMVILTTIAFTLASTHF. At 553-574 the chain is on the extracellular side; that stretch reads RRNRVRLPAPLDRLTGFNAFWY. Residues 575–595 form a helical membrane-spanning segment; the sequence is THHLLVVVYIMLIVHGTFLFF. Over 596–603 the chain is Cytoplasmic; sequence ADKWYQKT. Residues 604–621 traverse the membrane as a helical segment; that stretch reads TWMYISVPLVLYVAERSL. The Extracellular segment spans residues 622-750; that stretch reads RACRSKHYSV…PYGAPAQDYR (129 aa). The FAD-binding FR-type domain maps to 626–748; the sequence is SKHYSVKILK…DGPYGAPAQD (123 aa). A helical transmembrane segment spans residues 751–771; it reads SYDVLLLIGLGIGATPFISIL. Topologically, residues 772-952 are cytoplasmic; it reads KDLLNNSRDE…TRFEFHKEHF (181 aa).

The protein belongs to the RBOH (TC 5.B.1.3) family. In terms of assembly, monomer and homodimer. As to expression, expressed in roots, inflorescences, leaves and stems.

It localises to the membrane. Functionally, calcium-dependent NADPH oxidase that generates superoxide. This chain is Respiratory burst oxidase homolog protein E (RBOHE), found in Arabidopsis thaliana (Mouse-ear cress).